The primary structure comprises 169 residues: Putative outer membrane protein BBA03 (169 aa).

It is found in the cell outer membrane. The polypeptide is Putative outer membrane protein BBA03 (Borreliella burgdorferi (strain ATCC 35210 / DSM 4680 / CIP 102532 / B31) (Borrelia burgdorferi)).